A 236-amino-acid polypeptide reads, in one-letter code: THO complex subunit 7B (236 aa).

Residues glutamate 99 to asparagine 228 adopt a coiled-coil conformation.

Belongs to the THOC7 family. As to quaternary structure, component of the THO complex, which is composed of THO1, THO2, THO3, THO5, THO6 and THO7.

It localises to the nucleus. Its function is as follows. Acts as a component of the THO subcomplex of the TREX complex which is thought to couple mRNA transcription, processing and nuclear export. The polypeptide is THO complex subunit 7B (THO7B) (Arabidopsis thaliana (Mouse-ear cress)).